The following is a 541-amino-acid chain: Chaperonin GroEL 2 (541 aa).

ATP contacts are provided by residues Thr29–Pro32, Asp86–Thr90, Gly413, Asn476–Ala478, and Asp492.

The protein belongs to the chaperonin (HSP60) family. In terms of assembly, forms a cylinder of 14 subunits composed of two heptameric rings stacked back-to-back. Interacts with the co-chaperonin GroES.

It is found in the secreted. The protein localises to the capsule. The protein resides in the cell surface. Its subcellular location is the cell wall. The enzyme catalyses ATP + H2O + a folded polypeptide = ADP + phosphate + an unfolded polypeptide.. Together with its co-chaperonin GroES, plays an essential role in assisting protein folding. The GroEL-GroES system forms a nano-cage that allows encapsulation of the non-native substrate proteins and provides a physical environment optimized to promote and accelerate protein folding. This Mycolicibacterium vanbaalenii (strain DSM 7251 / JCM 13017 / BCRC 16820 / KCTC 9966 / NRRL B-24157 / PYR-1) (Mycobacterium vanbaalenii) protein is Chaperonin GroEL 2.